Here is a 39-residue protein sequence, read N- to C-terminus: U1-ectatotoxin-Et1b subunit A (39 aa).

The cysteines at positions 14 and 35 are disulfide-linked.

It belongs to the ectatomin family. Ectatomin-Et subfamily. Heterodimer of subunits A and B; disulfide-linked. Expressed by the venom gland.

Its subcellular location is the secreted. The protein resides in the target cell membrane. The sequence is that of U1-ectatotoxin-Et1b subunit A from Ectatomma tuberculatum (Selva ant).